The primary structure comprises 63 residues: Potassium channel toxin alpha-KTx 21.1 (63 aa).

An N-terminal signal peptide occupies residues 1-27 (MQFSGVVLILISMTLVNFVFFETKVEA). Intrachain disulfides connect cysteine 33–cysteine 53, cysteine 38–cysteine 58, and cysteine 42–cysteine 60.

The protein belongs to the short scorpion toxin superfamily. Potassium channel inhibitor family. Alpha-KTx 21 subfamily. In terms of tissue distribution, expressed by the venom gland.

The protein localises to the secreted. In terms of biological role, reversibly and voltage-independently blocks voltage-gated potassium channels rKv1.2/KCNA2 (73%) (IC(50)=196 nM), hKv1.3/KCNA3 (50%) (IC(50)=508 nM), Shaker IR (30%), rKv1.6/KCNA6 (22%) (at 0.5 uM). Interaction of Ts15 with Kv1.3/KCNA3 is stronger than its interaction with Kv1.2/KCNA2. The chain is Potassium channel toxin alpha-KTx 21.1 from Tityus serrulatus (Brazilian scorpion).